The following is a 497-amino-acid chain: MTYLLALDQGTSSSRSIVFDELGHIVAQAQQELPQIYPKPGWVEHDPMEIWRTQLATAREALGKAGLKASDIRALGITNQRETTVVWHRATGQPIHNAIVWQDRRAEATCAQLREQGKEALIQSKTGLLIDAYFSGTKLKWLLDNVPGVRAQAERGELAFGTIDSWLMWQLTGGALHATDVSNASRTMLFNVRTNQWDAELLDLLGIPASLMPQVLPSSAHYGETRPELLGHAIAIGGVAGDQQSALFGQACFKAGMAKNTYGTGCFMLMHTGTQFQTSHNGLLTTSAAQTTAHPEFAMEGSVFVGGAVVQWLRDGLHAIQGSGEVQALAQSVPDSGGVMMVPAFTGLGAPYWKPDARGTITGLTRGTTVAHIARAALESIAYQSAALLQAMSRDAVSSGAAPLAELRVDGGACANDLLMQFQADLLGIPVLRPAVIETTALGAAYLAGLSSGVYRSTDELSGMWRAERTFLPTLGADSAAALMNRWEHAVRQTVLP.

ADP is bound at residue threonine 11. Threonine 11, serine 12, and serine 13 together coordinate ATP. Threonine 11 serves as a coordination point for sn-glycerol 3-phosphate. Position 15 (arginine 15) interacts with ADP. Positions 81, 82, 133, and 242 each coordinate sn-glycerol 3-phosphate. Positions 81, 82, 133, 242, and 243 each coordinate glycerol. Threonine 264 and glycine 307 together coordinate ADP. ATP contacts are provided by threonine 264, glycine 307, glutamine 311, and glycine 412. Residues glycine 412 and asparagine 416 each coordinate ADP.

This sequence belongs to the FGGY kinase family.

It catalyses the reaction glycerol + ATP = sn-glycerol 3-phosphate + ADP + H(+). It functions in the pathway polyol metabolism; glycerol degradation via glycerol kinase pathway; sn-glycerol 3-phosphate from glycerol: step 1/1. With respect to regulation, inhibited by fructose 1,6-bisphosphate (FBP). Its function is as follows. Key enzyme in the regulation of glycerol uptake and metabolism. Catalyzes the phosphorylation of glycerol to yield sn-glycerol 3-phosphate. The chain is Glycerol kinase from Polaromonas sp. (strain JS666 / ATCC BAA-500).